The sequence spans 419 residues: Probable dual-specificity RNA methyltransferase RlmN (419 aa).

Residues 1-21 (MTAESDSPDGPVSAGTGRPVR) are disordered. Residue E124 is the Proton acceptor of the active site. Positions 130–369 (YPDRATVCVS…ATTVRDTRGR (240 aa)) constitute a Radical SAM core domain. C137 and C375 are oxidised to a cystine. Residues C144, C148, and C151 each contribute to the [4Fe-4S] cluster site. S-adenosyl-L-methionine-binding positions include 199 to 200 (GE), S233, 256 to 258 (SLH), and N332. The active-site S-methylcysteine intermediate is the C375. The segment at 383–419 (AGRARRVESARPVESARPVGVAGAASGSPAHGSRVLR) is disordered. Positions 397–419 (SARPVGVAGAASGSPAHGSRVLR) are enriched in low complexity.

This sequence belongs to the radical SAM superfamily. RlmN family. Requires [4Fe-4S] cluster as cofactor.

Its subcellular location is the cytoplasm. The catalysed reaction is adenosine(2503) in 23S rRNA + 2 reduced [2Fe-2S]-[ferredoxin] + 2 S-adenosyl-L-methionine = 2-methyladenosine(2503) in 23S rRNA + 5'-deoxyadenosine + L-methionine + 2 oxidized [2Fe-2S]-[ferredoxin] + S-adenosyl-L-homocysteine. It carries out the reaction adenosine(37) in tRNA + 2 reduced [2Fe-2S]-[ferredoxin] + 2 S-adenosyl-L-methionine = 2-methyladenosine(37) in tRNA + 5'-deoxyadenosine + L-methionine + 2 oxidized [2Fe-2S]-[ferredoxin] + S-adenosyl-L-homocysteine. Its function is as follows. Specifically methylates position 2 of adenine 2503 in 23S rRNA and position 2 of adenine 37 in tRNAs. The chain is Probable dual-specificity RNA methyltransferase RlmN from Frankia alni (strain DSM 45986 / CECT 9034 / ACN14a).